The chain runs to 948 residues: MEKVTSGLELVDISKRNFRKTLESLQEGAHSLLLLTIQWKEIESYFDSTRSVLEERAKELEALEESIKVKALELEKKEKELCLIDESMKAKQSEFEKKEKDFDLEQKAEVEKRKREVEQLEKFTTRMESVERVSDEKLMELGLRATELELKMEEVEKHRERIVAGDKLRGEFEPLVSLLAKNMGLSVTMPVKCSTLYLNENADEMVKKNTALARMVPYLDPAKVVLDAIEGSFKEYWKKDLGEADDRVVNSWIVLLENLIKMNLKITPQVKQEATPLGIAWLGKAKANMKNDPPQVFGCALFLAAYGLGSLTTHGVLLTLVERFLLYDHAPKLFRLLGLEEKVSGAVETLKKKEEYLATLKFICEFRLYKLCPGGRPGELLIEFFDSSDKAARVIAGTGTSMEAQKARREKKKADAAMAIKYIKEAKAETMFPAKILKRLAVVKNDESAQRAMEPVQKSYEKRQSTTKGVEKSEAKSSIPYEQKHVIKRPRLTEPTAPSQNLTVKQPEVVCVPTGKQVKESGADHQPDTIATHPSGTETKLNILSGSIKADMLRELVEKQPLKESEDLSNALKCTPDPAKLFLDTSMALCPTNTEGGYEFKMLITSASCSLLLNQLKKLLPKIGHPVKGDAKKLAVYWKDKIAKSKRDQLEVICFLQFLGIFGIVSEFKADDLLGLLDNSYWQTVSPDLCQFLGLDDAIPGFIQNLIKTGHRIKAIDYIYSFGMVHRFQPVSAIINDSLRITKESAEKSYREAKNESTTQVAAIDRQVRALRAAIKCISCHKLESEFQLGDLEEQIKSLLKLRRNTSNGSGSGSASSKPDSTIKQSQTAKPPTVAEVAPVTSNIPLEPSTEAASSSASKPFSKKNKRGKKRSMSGNNQSSGHIASHTSNHYPSHDYSLNQRLTWPVDNYDRGFTGFPNPDYNNNQWGQPEGPQFYHLYQPLDPRYRNY.

The stretch at 47 to 164 forms a coiled coil; it reads DSTRSVLEER…VEKHRERIVA (118 aa). Disordered regions lie at residues 447-500, 518-538, and 804-894; these read ESAQ…APSQ, VKESGADHQPDTIATHPSGTE, and RNTS…YPSH. Composition is skewed to basic and acidic residues over residues 459–475 and 518–527; these read SYEKRQSTTKGVEKSEA and VKESGADHQP. Residues 807 to 817 show a composition bias toward low complexity; it reads SNGSGSGSASS. Over residues 818–830 the composition is skewed to polar residues; that stretch reads KPDSTIKQSQTAK. Over residues 861–872 the composition is skewed to basic residues; that stretch reads FSKKNKRGKKRS. A compositionally biased stretch (polar residues) spans 873–894; sequence MSGNNQSSGHIASHTSNHYPSH.

It belongs to the Frigida family. As to expression, expressed at low levels during seed development.

The polypeptide is FRIGIDA-like protein 5 (FRL5) (Arabidopsis thaliana (Mouse-ear cress)).